A 338-amino-acid chain; its full sequence is Uroporphyrinogen decarboxylase (338 aa).

Residues R21–R25, D71, Y146, S201, and H316 each bind substrate.

Belongs to the uroporphyrinogen decarboxylase family. Homodimer.

The protein resides in the cytoplasm. The catalysed reaction is uroporphyrinogen III + 4 H(+) = coproporphyrinogen III + 4 CO2. It participates in porphyrin-containing compound metabolism; protoporphyrin-IX biosynthesis; coproporphyrinogen-III from 5-aminolevulinate: step 4/4. Catalyzes the decarboxylation of four acetate groups of uroporphyrinogen-III to yield coproporphyrinogen-III. The chain is Uroporphyrinogen decarboxylase from Rickettsia akari (strain Hartford).